The chain runs to 543 residues: Chaperonin GroEL (543 aa).

ATP is bound by residues 29–32 (TVGP), 86–90 (DGTTT), G413, and D504.

This sequence belongs to the chaperonin (HSP60) family. In terms of assembly, forms a cylinder of 14 subunits composed of two heptameric rings stacked back-to-back. Interacts with the co-chaperonin GroES.

It localises to the cytoplasm. The catalysed reaction is ATP + H2O + a folded polypeptide = ADP + phosphate + an unfolded polypeptide.. Together with its co-chaperonin GroES, plays an essential role in assisting protein folding. The GroEL-GroES system forms a nano-cage that allows encapsulation of the non-native substrate proteins and provides a physical environment optimized to promote and accelerate protein folding. The protein is Chaperonin GroEL of Mycoplasma genitalium (strain ATCC 33530 / DSM 19775 / NCTC 10195 / G37) (Mycoplasmoides genitalium).